A 144-amino-acid chain; its full sequence is Testis-specific protein TSX (144 aa).

Disordered stretches follow at residues 1 to 21 (MSEK…DLPE), 69 to 99 (EDRV…RDID), and 120 to 144 (FTDQ…NPTD). Positions 75–90 (TDDEDTCQAGCTEDDE) are enriched in acidic residues.

As to expression, testis.

In terms of biological role, may have an RNA/DNA binding role. This is Testis-specific protein TSX (Tsx) from Mus musculus (Mouse).